The sequence spans 392 residues: ATP phosphoribosyltransferase regulatory subunit (392 aa).

This sequence belongs to the class-II aminoacyl-tRNA synthetase family. HisZ subfamily. Heteromultimer composed of HisG and HisZ subunits.

It is found in the cytoplasm. The protein operates within amino-acid biosynthesis; L-histidine biosynthesis; L-histidine from 5-phospho-alpha-D-ribose 1-diphosphate: step 1/9. Functionally, required for the first step of histidine biosynthesis. May allow the feedback regulation of ATP phosphoribosyltransferase activity by histidine. The sequence is that of ATP phosphoribosyltransferase regulatory subunit from Listeria monocytogenes serotype 4b (strain F2365).